Reading from the N-terminus, the 594-residue chain is Solute carrier family 22 member 14 (594 aa).

Residues 1–70 (MAGEENFKEE…EFGTFQQRLV (70 aa)) lie on the Cytoplasmic side of the membrane. A helical transmembrane segment spans residues 71 to 91 (ALTFIPSIMSAFFMFADHFVF). Residues 92 to 184 (TAQKPYCNTS…LVCGMETKKD (93 aa)) are Extracellular-facing. Asparagine 99, asparagine 117, asparagine 125, and asparagine 150 each carry an N-linked (GlcNAc...) asparagine glycan. A helical membrane pass occupies residues 185–205 (TAQIMFMAGLPIGSLIFRLIT). At 206–210 (DKMGR) the chain is on the cytoplasmic side. The helical transmembrane segment at 211-231 (YPAILLSLLGLIIFGFGTAFM) threads the bilayer. The Extracellular portion of the chain corresponds to 232–235 (NSFH). The helical transmembrane segment at 236–256 (LYLFFRFGISQSVVGYAISSI) threads the bilayer. Over 257–270 (SLATEWLVGEHRAH) the chain is Cytoplasmic. A helical transmembrane segment spans residues 271-291 (AIILGHCFFAVGAVLLTGIAY). The Extracellular portion of the chain corresponds to 292 to 297 (SLPHWQ). The chain crosses the membrane as a helical span at residues 298-318 (LLFLVGGILVIPFISYIWILP). The Cytoplasmic segment spans residues 319-379 (ESPRWLMMKG…DFCKNRQLCK (61 aa)). Residues 380–400 (VTLVMSCVWFTVSYTYFTLSL) traverse the membrane as a helical segment. Topologically, residues 401-408 (RMRELGVS) are extracellular. The helical transmembrane segment at 409 to 431 (VHFRHVVPSIMEVPARLCCIFLL) threads the bilayer. At 432 to 437 (QQIGRK) the chain is on the cytoplasmic side. A helical membrane pass occupies residues 438-458 (WSLAVTLLQAIIWCLLLLFLP). Topologically, residues 459-488 (EGEDGLRLKWPRCPATELKSMTILVLMLRE) are extracellular. Residues 489-509 (FSLAATVTVFFLYTAELLPTV) form a helical membrane-spanning segment. The Cytoplasmic portion of the chain corresponds to 510–512 (LRA). A helical membrane pass occupies residues 513–533 (TGLGLVSLASVAGAILSLTII). Residues 534-538 (SQTPS) lie on the Extracellular side of the membrane. The helical transmembrane segment at 539-559 (LLPIFLCCVLAIVAFSLSSLL) threads the bilayer. At 560 to 594 (PETRDQPLSESLNHSSQIRNKVKDMKTKETSSDDV) the chain is on the cytoplasmic side. A disordered region spans residues 566 to 594 (PLSESLNHSSQIRNKVKDMKTKETSSDDV). Residues 567–578 (LSESLNHSSQIR) show a composition bias toward polar residues. Over residues 580–594 (KVKDMKTKETSSDDV) the composition is skewed to basic and acidic residues.

Belongs to the major facilitator (TC 2.A.1) superfamily. Organic cation transporter (TC 2.A.1.19) family. Ubiquitous.

Its subcellular location is the mitochondrion inner membrane. It is found in the cell projection. It localises to the cilium. The protein resides in the flagellum membrane. It catalyses the reaction riboflavin(in) = riboflavin(out). Riboflavin transporter localized at the inner mitochondrial membrane of the spermatozoa midpiece, which is required for male fertility. SLC22A14-mediated riboflavin transport is essential for spermatozoa energy generation and motility: riboflavin is the precursor of FMN and FAD, which are coenzymes of many enzymes in the TCA cycle (the citric acid cycle) in mitochondria. Required for sperm motility and normal sperm flagellar structure. In Homo sapiens (Human), this protein is Solute carrier family 22 member 14.